The chain runs to 170 residues: Adenine phosphoribosyltransferase (170 aa).

This sequence belongs to the purine/pyrimidine phosphoribosyltransferase family. In terms of assembly, homodimer.

The protein localises to the cytoplasm. It catalyses the reaction AMP + diphosphate = 5-phospho-alpha-D-ribose 1-diphosphate + adenine. It participates in purine metabolism; AMP biosynthesis via salvage pathway; AMP from adenine: step 1/1. Catalyzes a salvage reaction resulting in the formation of AMP, that is energically less costly than de novo synthesis. The protein is Adenine phosphoribosyltransferase of Bacillus pumilus (strain SAFR-032).